Reading from the N-terminus, the 112-residue chain is T cell receptor alpha variable 41 (112 aa).

Positions Met-1–Ala-21 are cleaved as a signal peptide. Positions Asn-24–Arg-112 constitute an Ig-like domain. 2 N-linked (GlcNAc...) asparagine glycosylation sites follow: Asn-32 and Asn-44. The cysteines at positions 45 and 109 are disulfide-linked.

Alpha-beta TR is a heterodimer composed of an alpha and beta chain; disulfide-linked. The alpha-beta TR is associated with the transmembrane signaling CD3 coreceptor proteins to form the TR-CD3 (TcR or TCR). The assembly of alpha-beta TR heterodimers with CD3 occurs in the endoplasmic reticulum where a single alpha-beta TR heterodimer associates with one CD3D-CD3E heterodimer, one CD3G-CD3E heterodimer and one CD247 homodimer forming a stable octameric structure. CD3D-CD3E and CD3G-CD3E heterodimers preferentially associate with TR alpha and TR beta chains, respectively. The association of the CD247 homodimer is the last step of TcR assembly in the endoplasmic reticulum and is required for transport to the cell surface.

It localises to the cell membrane. V region of the variable domain of T cell receptor (TR) alpha chain that participates in the antigen recognition. Alpha-beta T cell receptors are antigen specific receptors which are essential to the immune response and are present on the cell surface of T lymphocytes. Recognize peptide-major histocompatibility (MH) (pMH) complexes that are displayed by antigen presenting cells (APC), a prerequisite for efficient T cell adaptive immunity against pathogens. Binding of alpha-beta TR to pMH complex initiates TR-CD3 clustering on the cell surface and intracellular activation of LCK that phosphorylates the ITAM motifs of CD3G, CD3D, CD3E and CD247 enabling the recruitment of ZAP70. In turn ZAP70 phosphorylates LAT, which recruits numerous signaling molecules to form the LAT signalosome. The LAT signalosome propagates signal branching to three major signaling pathways, the calcium, the mitogen-activated protein kinase (MAPK) kinase and the nuclear factor NF-kappa-B (NF-kB) pathways, leading to the mobilization of transcription factors that are critical for gene expression and essential for T cell growth and differentiation. The T cell repertoire is generated in the thymus, by V-(D)-J rearrangement. This repertoire is then shaped by intrathymic selection events to generate a peripheral T cell pool of self-MH restricted, non-autoaggressive T cells. Post-thymic interaction of alpha-beta TR with the pMH complexes shapes TR structural and functional avidity. The sequence is that of T cell receptor alpha variable 41 from Homo sapiens (Human).